The chain runs to 591 residues: Negative elongation factor D (591 aa).

The interval M1–V44 is disordered. The span at D34–V44 shows a compositional bias: acidic residues.

Belongs to the NELF-D family. As to quaternary structure, the NELF complex is composed of NELFA, NELFB, NELFCD and NELFE; NELFA and NELFCD form a stable subcomplex that binds primarily through NELFCD to the N-terminus of NELFB. Binds RNA which may help to stabilize the NELF complex on nucleic acid. In vitro, the NELFA:NELFCD subcomplex binds to ssDNA and ssRNA in a sequence- and structure-dependent manner. Interacts with ARAF1. Interacts with PCF11. Interacts with NELFB. Interacts with KAT8.

Its subcellular location is the nucleus. Its function is as follows. Essential component of the NELF complex, a complex that negatively regulates the elongation of transcription by RNA polymerase II. The NELF complex, which acts via an association with the DSIF complex and causes transcriptional pausing, is counteracted by the P-TEFb kinase complex. This chain is Negative elongation factor D (Nelfcd), found in Mus musculus (Mouse).